Consider the following 527-residue polypeptide: Phosphoenolpyruvate carboxykinase (ATP) (527 aa).

Substrate-binding residues include Arg-56, Tyr-192, and Lys-198. ATP-binding positions include Lys-198, His-217, and 233–241 (GLSGTGKTT). The Mn(2+) site is built by Lys-198 and His-217. Mn(2+) is bound at residue Asp-254. Glu-282, Arg-319, and Thr-444 together coordinate ATP. Arg-319 is a binding site for substrate.

It belongs to the phosphoenolpyruvate carboxykinase (ATP) family. Mn(2+) is required as a cofactor.

It localises to the cytoplasm. The catalysed reaction is oxaloacetate + ATP = phosphoenolpyruvate + ADP + CO2. The protein operates within carbohydrate biosynthesis; gluconeogenesis. In terms of biological role, involved in the gluconeogenesis. Catalyzes the conversion of oxaloacetate (OAA) to phosphoenolpyruvate (PEP) through direct phosphoryl transfer between the nucleoside triphosphate and OAA. The polypeptide is Phosphoenolpyruvate carboxykinase (ATP) (Bacillus velezensis (strain DSM 23117 / BGSC 10A6 / LMG 26770 / FZB42) (Bacillus amyloliquefaciens subsp. plantarum)).